A 212-amino-acid polypeptide reads, in one-letter code: Outer surface protein C (212 aa).

The N-terminal stretch at 1–18 is a signal peptide; the sequence is MKKNTLSAILMTLFLFIS. Cys19 carries the N-palmitoyl cysteine lipid modification. Cys19 is lipidated: S-diacylglycerol cysteine.

The protein belongs to the OspC lipoprotein family. In terms of assembly, homodimer. Interacts with tick Ixodes ricinus salivary protein Iric-1. Binds human (host) plasminogen. The N-terminus is blocked.

It is found in the cell outer membrane. The protein localises to the cell surface. Major immunodominant protein in mammalian hosts. Required for initial stages of mammalian infection. Inhibits macrophage-mediated phagocytosis of the bacteria. Binds human plasminogen; this probably confers an extracellular protease activity on the bacteria that allows it to traverse tissue. Unlike closely related strain B31, its interaction with Ixodes ricinus salivary protein Iric-1 does not protect against antibody-mediated destruction in vitro. The chain is Outer surface protein C from Borreliella afzelii (strain PKo) (Borrelia afzelii).